A 406-amino-acid chain; its full sequence is Tryptophan 2,3-dioxygenase (406 aa).

Substrate is bound by residues 72 to 76 (FIVTH) and arginine 144. Histidine 328 contacts heme. Residue threonine 342 participates in substrate binding.

Belongs to the tryptophan 2,3-dioxygenase family. As to quaternary structure, homotetramer. Dimer of dimers. Heme serves as cofactor.

The catalysed reaction is L-tryptophan + O2 = N-formyl-L-kynurenine. It participates in amino-acid degradation; L-tryptophan degradation via kynurenine pathway; L-kynurenine from L-tryptophan: step 1/2. Functionally, heme-dependent dioxygenase that catalyzes the oxidative cleavage of the L-tryptophan (L-Trp) pyrrole ring and converts L-tryptophan to N-formyl-L-kynurenine. Catalyzes the oxidative cleavage of the indole moiety. The polypeptide is Tryptophan 2,3-dioxygenase (Xenopus laevis (African clawed frog)).